The sequence spans 90 residues: Small ribosomal subunit protein bS18 (90 aa).

It belongs to the bacterial ribosomal protein bS18 family. As to quaternary structure, part of the 30S ribosomal subunit. Forms a tight heterodimer with protein bS6.

Its function is as follows. Binds as a heterodimer with protein bS6 to the central domain of the 16S rRNA, where it helps stabilize the platform of the 30S subunit. This is Small ribosomal subunit protein bS18 from Bordetella avium (strain 197N).